Here is a 648-residue protein sequence, read N- to C-terminus: Phosphatidylinositol-3,5-bisphosphate 3-phosphatase MTMR14 (648 aa).

Over residues 1-19 the composition is skewed to low complexity; that stretch reads MAGARAAAAASAGSTASSG. The interval 1–27 is disordered; sequence MAGARAAAAASAGSTASSGSPPPQEPG. Position 193 is an N6-acetyllysine (Lys-193). N-linked (GlcNAc...) asparagine glycans are attached at residues Asn-225 and Asn-240. The Phosphocysteine intermediate role is filled by Cys-329. A 1,2-diacyl-sn-glycero-3-phospho-(1D-myo-inositol-3,5-bisphosphate)-binding residues include Gly-332, Trp-333, Asp-334, Arg-335, and Arg-381. A 1,2-diacyl-sn-glycero-3-phospho-(1D-myo-inositol-3-phosphate) contacts are provided by Gly-332, Trp-333, Asp-334, Arg-335, and Arg-381. Residues 471–544 form a disordered region; that stretch reads PTQAAWRKSH…PRSVDHPLPG (74 aa). Over residues 494-506 the composition is skewed to basic and acidic residues; that stretch reads PSEERLPSHHGLT. The residue at position 516 (Ser-516) is a Phosphoserine. N-linked (GlcNAc...) asparagine glycosylation is present at Asn-517. Ser-528, Ser-578, and Ser-622 each carry phosphoserine. An Omega-N-methylarginine modification is found at Arg-636.

Belongs to the protein-tyrosine phosphatase family. Non-receptor class myotubularin subfamily.

The protein localises to the cytoplasm. It catalyses the reaction a 1,2-diacyl-sn-glycero-3-phospho-(1D-myo-inositol-3,5-bisphosphate) + H2O = a 1,2-diacyl-sn-glycero-3-phospho-(1D-myo-inositol-5-phosphate) + phosphate. The enzyme catalyses a 1,2-diacyl-sn-glycero-3-phospho-(1D-myo-inositol-3-phosphate) + H2O = a 1,2-diacyl-sn-glycero-3-phospho-(1D-myo-inositol) + phosphate. Lipid phosphatase that specifically dephosphorylates the D-3 position of phosphatidylinositol 3-phosphate and phosphatidylinositol 3,5-bisphosphate, generating phosphatidylinositol and phosphatidylinositol 5-phosphate. The protein is Phosphatidylinositol-3,5-bisphosphate 3-phosphatase MTMR14 of Mus musculus (Mouse).